A 111-amino-acid polypeptide reads, in one-letter code: DNA-binding protein MTH_1615 (111 aa).

The protein belongs to the PDCD5 family.

DNA-binding protein which can interact with a randomly chosen 20-mer of double-stranded DNA. The chain is DNA-binding protein MTH_1615 from Methanothermobacter thermautotrophicus (strain ATCC 29096 / DSM 1053 / JCM 10044 / NBRC 100330 / Delta H) (Methanobacterium thermoautotrophicum).